A 219-amino-acid chain; its full sequence is uncharacterized protein (219 aa).

Residues 1 to 26 (MNDRGVPNSRTGPSLLALLPAANSYA) form the signal peptide. 2 disordered regions span residues 36-57 (AVGV…TRGG) and 88-219 (SGLG…GLCE). Low complexity predominate over residues 127–173 (LSPPSALGSSPAGRGRPAPAIAAAKSSPLSASAAPGRCGARPRAPSR). Basic residues predominate over residues 176–202 (RERRPRGNPRAPLRRGARGRRRSHTRG).

This is an uncharacterized protein from Gallid herpesvirus 2 (strain Chicken/Md5/ATCC VR-987) (GaHV-2).